A 300-amino-acid chain; its full sequence is Arrestin domain-containing protein 4 (300 aa).

2 short sequence motifs (PPxY motif) span residues 231–234 (PPNY) and 276–279 (PPLY).

It belongs to the arrestin family. As to quaternary structure, interacts with ADRB2. Interacts (via PPxY motifs) with ITCH, NEDD4L and WWP2. Interacts with AVPR2. Identified in a complex containing at least ARRDC4, AVPR2 and HGS. Interacts with SLC11A2; controls the incorporation of SLC11A2 into extracellular vesicles through an ubiquitination-dependent mechanism. Interacts with TRIM65.

It is found in the early endosome. It localises to the cell membrane. Its subcellular location is the cytoplasmic vesicle. In terms of biological role, functions as an adapter recruiting ubiquitin-protein ligases to their specific substrates. Plays a role in endocytosis of activated G protein-coupled receptors (GPCRs) Through an ubiquitination-dependent mechanism also plays a role in the incorporation of SLC11A2 into extracellular vesicles. May play a role in glucose uptake. Participates in innate immune response by promoting IFIH1/MDA5 activation through interaction with TRIM65. This Rattus norvegicus (Rat) protein is Arrestin domain-containing protein 4 (Arrdc4).